Consider the following 126-residue polypeptide: MAEKLPPEVQAQLAKFQQLKDQLDRLLLEKSTIENELREINKVLEELSVLNADATIYKIVGNLLVKSDKTSVEKELNDRKELLELRSRTYQKQESILRKQLEDLQAKINEMLSKYYPQGGQTGIKA.

It belongs to the prefoldin subunit beta family. As to quaternary structure, heterohexamer of two alpha and four beta subunits.

The protein resides in the cytoplasm. In terms of biological role, molecular chaperone capable of stabilizing a range of proteins. Seems to fulfill an ATP-independent, HSP70-like function in archaeal de novo protein folding. The protein is Prefoldin subunit beta of Saccharolobus islandicus (strain Y.N.15.51 / Yellowstone #2) (Sulfolobus islandicus).